Here is a 252-residue protein sequence, read N- to C-terminus: Thiazole synthase (252 aa).

Lys91 functions as the Schiff-base intermediate with DXP in the catalytic mechanism. 1-deoxy-D-xylulose 5-phosphate is bound by residues Gly152, 179–180, and 201–202; these read AG and NT.

The protein belongs to the ThiG family. In terms of assembly, homotetramer. Forms heterodimers with either ThiH or ThiS.

It localises to the cytoplasm. It carries out the reaction [ThiS sulfur-carrier protein]-C-terminal-Gly-aminoethanethioate + 2-iminoacetate + 1-deoxy-D-xylulose 5-phosphate = [ThiS sulfur-carrier protein]-C-terminal Gly-Gly + 2-[(2R,5Z)-2-carboxy-4-methylthiazol-5(2H)-ylidene]ethyl phosphate + 2 H2O + H(+). Its pathway is cofactor biosynthesis; thiamine diphosphate biosynthesis. Functionally, catalyzes the rearrangement of 1-deoxy-D-xylulose 5-phosphate (DXP) to produce the thiazole phosphate moiety of thiamine. Sulfur is provided by the thiocarboxylate moiety of the carrier protein ThiS. In vitro, sulfur can be provided by H(2)S. The chain is Thiazole synthase from Gluconobacter oxydans (strain 621H) (Gluconobacter suboxydans).